A 176-amino-acid chain; its full sequence is Variant surface antigen A (176 aa).

The signal sequence occupies residues 1–29 (MKKSIFSKKLLVSFGSLVALAAIPLIAIS). A lipid anchor (N-palmitoyl cysteine) is attached at C30. A lipid anchor (S-diacylglycerol cysteine) is attached at C30. The disordered stretch occupies residues 33–176 (TDNNSSQSQQ…TKTENTQHTS (144 aa)). Positions 35–121 (NNSSQSQQPG…GSNSESGMNS (87 aa)) are enriched in low complexity. Residues 123 to 135 (KTENTQQSEAPGT) form repeat 1. Residues 123 to 176 (KTENTQQSEAPGTNTGNKTTSESNSESGMNSEKTENTQQSEAPGTKTENTQHTS) form a 2.5 X 13 AA repeats region. Residues 126-142 (NTQQSEAPGTNTGNKTT) show a composition bias toward polar residues. The segment covering 143-153 (SESNSESGMNS) has biased composition (low complexity). Repeat unit 2 spans residues 155–167 (KTENTQQSEAPGT). Over residues 158 to 176 (NTQQSEAPGTKTENTQHTS) the composition is skewed to polar residues. The stretch at 168–176 (KTENTQHTS) is one 3; truncated repeat.

The protein localises to the cell membrane. Its function is as follows. Responsible for the antigenic diversity for host adaptation. In Mesomycoplasma hyorhinis (Mycoplasma hyorhinis), this protein is Variant surface antigen A (vlpA).